The primary structure comprises 136 residues: MLSPKRTRFRKQHRGRMKGKSCRGNHICFGRYALQVLEPAWITARQIEAGRRAMTRYARRGGKIWVRIFPDKPVTIRPTETRMGSGKGSPEYWVAVVKPGRILYEMSGVSETVARAAISIAASKMPIRSQFLRLEI.

The protein belongs to the universal ribosomal protein uL16 family. As to quaternary structure, part of the 50S ribosomal subunit.

It is found in the plastid. The protein localises to the chloroplast. The protein is Large ribosomal subunit protein uL16c of Zea mays (Maize).